Reading from the N-terminus, the 100-residue chain is MARKGLIQREKKRQKLEQKYHLIRRSSKKEISKVQSLNDKWEIYRKLQSPPRNSAPTRLHRRCFATGRPRANYRDFGLSGHILREMVHACLLPGARRSSW.

It belongs to the universal ribosomal protein uS14 family. In terms of assembly, part of the 30S ribosomal subunit.

Its subcellular location is the plastid. It is found in the chloroplast. Its function is as follows. Binds 16S rRNA, required for the assembly of 30S particles. This chain is Small ribosomal subunit protein uS14c, found in Coffea arabica (Arabian coffee).